Reading from the N-terminus, the 682-residue chain is TPR repeat-containing thioredoxin TTL4 (682 aa).

Disordered stretches follow at residues Met1–Leu120 and Asn132–Ile157. Ser8 is modified (phosphoserine). Basic and acidic residues predominate over residues Lys16–Asp39. Ser42 is subject to Phosphoserine. Positions Gly48–Gly71 are enriched in low complexity. 7 TPR repeats span residues Ser211 to Asn244, Ala246 to Tyr278, Arg280 to Ala312, Ala402 to Asn435, Val449 to Asn482, Ser483 to Tyr516, and Lys518 to Asp550. The 88-residue stretch at Asp587–Glu674 folds into the Thioredoxin domain.

Widely expressed.

Functionally, involved in osmotic and salt stress tolerance. May play a role in the control of meristematic cell size during osmotic stress. This chain is TPR repeat-containing thioredoxin TTL4 (TTL4), found in Arabidopsis thaliana (Mouse-ear cress).